Here is a 505-residue protein sequence, read N- to C-terminus: AMP phosphorylase (505 aa).

AMP-binding positions include Gly-170, 196-201, and Thr-205; that span reads SRAITS. Asp-258 (proton donor) is an active-site residue. The AMP site is built by Ser-266 and Lys-290.

This sequence belongs to the thymidine/pyrimidine-nucleoside phosphorylase family. Type 2 subfamily.

It carries out the reaction AMP + phosphate = alpha-D-ribose 1,5-bisphosphate + adenine. It catalyses the reaction CMP + phosphate = cytosine + alpha-D-ribose 1,5-bisphosphate. The catalysed reaction is UMP + phosphate = alpha-D-ribose 1,5-bisphosphate + uracil. Functionally, catalyzes the conversion of AMP and phosphate to adenine and ribose 1,5-bisphosphate (R15P). Exhibits phosphorylase activity toward CMP and UMP in addition to AMP. Functions in an archaeal AMP degradation pathway, together with R15P isomerase and RubisCO. This is AMP phosphorylase from Methanococcus maripaludis (strain C5 / ATCC BAA-1333).